A 109-amino-acid chain; its full sequence is Iron-sulfur cluster assembly protein CyaY (109 aa).

It belongs to the frataxin family.

Functionally, involved in iron-sulfur (Fe-S) cluster assembly. May act as a regulator of Fe-S biogenesis. The sequence is that of Iron-sulfur cluster assembly protein CyaY from Shewanella putrefaciens (strain CN-32 / ATCC BAA-453).